A 431-amino-acid chain; its full sequence is L-lysine N6-monooxygenase MbtG (431 aa).

The N-terminal stretch at 1–21 (MNPTLAVLGAGAKAVAVAAKA) is a signal peptide.

The protein belongs to the lysine N(6)-hydroxylase/L-ornithine N(5)-oxygenase family. Requires FAD as cofactor.

The enzyme catalyses L-lysine + NADPH + O2 = N(6)-hydroxy-L-lysine + NADP(+) + H2O. It participates in siderophore biosynthesis; mycobactin biosynthesis. Functionally, flavoprotein monooxygenase required for N-hydroxylation of the two acylated lysine residues during mycobactin assembly, thus producing the hydroxamate groups necessary for iron sequestration. Is also able, but less efficiently, to hydroxylate L-lysine (non acylated) in vitro. This is L-lysine N6-monooxygenase MbtG (mbtG) from Mycobacterium bovis (strain ATCC BAA-935 / AF2122/97).